Reading from the N-terminus, the 75-residue chain is ATP synthase subunit 9, mitochondrial (75 aa).

Transmembrane regions (helical) follow at residues 10–30 and 55–75; these read LVLG…GILF and FALV…VYFI.

It belongs to the ATPase C chain family. In terms of assembly, F-type ATPases have 2 components, CF(1) - the catalytic core - and CF(0) - the membrane proton channel. CF(1) has five subunits: alpha(3), beta(3), gamma(1), delta(1), epsilon(1). CF(0) has three main subunits: a, b and c.

It localises to the mitochondrion membrane. Functionally, mitochondrial membrane ATP synthase (F(1)F(0) ATP synthase or Complex V) produces ATP from ADP in the presence of a proton gradient across the membrane which is generated by electron transport complexes of the respiratory chain. F-type ATPases consist of two structural domains, F(1) - containing the extramembraneous catalytic core and F(0) - containing the membrane proton channel, linked together by a central stalk and a peripheral stalk. During catalysis, ATP synthesis in the catalytic domain of F(1) is coupled via a rotary mechanism of the central stalk subunits to proton translocation. Part of the complex F(0) domain. A homomeric c-ring of probably 10 subunits is part of the complex rotary element. This Paramecium tetraurelia protein is ATP synthase subunit 9, mitochondrial (ATP9).